A 428-amino-acid chain; its full sequence is MGRGVYTLALRGLAPLIWLWMWRRARRAGGQWELFAPARFGRAGARAPAPLAAPVWVHAVSLGETRAAQPLVQALLERGLPVLLTHTTATGRAEGERLFGAAIGRGQLQQAWLPYDFPGATRRFLARHAPRCGLLMEREVWPNLLAAARAQGVPMALVSARFSASSLRQAGWLGQALREALAGLDRVLAQTDEDGARLCQAGANAYTVTGSLKFDVALPEAQLRVGHAWAGATGRPVIALASTREGEDAMFIEAIGALQAHRAATPRPLILLIPRHPQRFDEAAAQLQAAGLAYARRSAGSGEPGPHIDVLLGDTLGEMPFYYAAADVAIVGGSFARLGGQNLIEACAAGTPVIVGPHTFNFKDAARDAIAAGAALRAPDARTALDWALQLLAEPARRQAMSEAARAWTAAHAGATRRTLDALEDWLG.

The Proton acceptor role is filled by E64. CMP is bound by residues 274–275 (PR), 316–318 (LGE), and 342–345 (NLIE).

It belongs to the glycosyltransferase group 1 family. Glycosyltransferase 30 subfamily.

It localises to the cell inner membrane. It carries out the reaction lipid IVA (E. coli) + CMP-3-deoxy-beta-D-manno-octulosonate = alpha-Kdo-(2-&gt;6)-lipid IVA (E. coli) + CMP + H(+). Its pathway is bacterial outer membrane biogenesis; LPS core biosynthesis. Involved in lipopolysaccharide (LPS) biosynthesis. Catalyzes the transfer of a single 3-deoxy-D-manno-octulosonate (Kdo) residue from CMP-Kdo to lipid IV(A), the tetraacyldisaccharide-1,4'-bisphosphate precursor of lipid A. In Bordetella pertussis, this protein is 3-deoxy-D-manno-octulosonic acid transferase (waaA).